We begin with the raw amino-acid sequence, 488 residues long: Malonate-semialdehyde dehydrogenase (488 aa).

The NAD(+) site is built by A150, F152, K176, E179, R180, S229, and T251. C284 (nucleophile) is an active-site residue. NAD(+) is bound at residue E382.

This sequence belongs to the aldehyde dehydrogenase family. IolA subfamily. As to quaternary structure, homotetramer.

It carries out the reaction 3-oxopropanoate + NAD(+) + CoA + H2O = hydrogencarbonate + acetyl-CoA + NADH + H(+). The catalysed reaction is 2-methyl-3-oxopropanoate + NAD(+) + CoA + H2O = propanoyl-CoA + hydrogencarbonate + NADH + H(+). The protein operates within polyol metabolism; myo-inositol degradation into acetyl-CoA; acetyl-CoA from myo-inositol: step 7/7. Catalyzes the oxidation of malonate semialdehyde (MSA) and methylmalonate semialdehyde (MMSA) into acetyl-CoA and propanoyl-CoA, respectively. Is involved in a myo-inositol catabolic pathway. Bicarbonate, and not CO2, is the end-product of the enzymatic reaction. This Listeria innocua serovar 6a (strain ATCC BAA-680 / CLIP 11262) protein is Malonate-semialdehyde dehydrogenase.